The following is a 729-amino-acid chain: Phosphoribosylformylglycinamidine synthase subunit PurL (729 aa).

Residue histidine 54 is part of the active site. ATP is bound by residues tyrosine 57 and lysine 96. A Mg(2+)-binding site is contributed by glutamate 98. Substrate is bound by residues 99-102 (SHNH) and arginine 121. Histidine 100 acts as the Proton acceptor in catalysis. Aspartate 122 is a Mg(2+) binding site. Glutamine 245 is a substrate binding site. Position 273 (aspartate 273) interacts with Mg(2+). A substrate-binding site is contributed by 317-319 (ETQ). Aspartate 495 and glycine 532 together coordinate ATP. Asparagine 533 lines the Mg(2+) pocket. Serine 535 contributes to the substrate binding site.

The protein belongs to the FGAMS family. As to quaternary structure, monomer. Part of the FGAM synthase complex composed of 1 PurL, 1 PurQ and 2 PurS subunits.

It is found in the cytoplasm. The catalysed reaction is N(2)-formyl-N(1)-(5-phospho-beta-D-ribosyl)glycinamide + L-glutamine + ATP + H2O = 2-formamido-N(1)-(5-O-phospho-beta-D-ribosyl)acetamidine + L-glutamate + ADP + phosphate + H(+). Its pathway is purine metabolism; IMP biosynthesis via de novo pathway; 5-amino-1-(5-phospho-D-ribosyl)imidazole from N(2)-formyl-N(1)-(5-phospho-D-ribosyl)glycinamide: step 1/2. Functionally, part of the phosphoribosylformylglycinamidine synthase complex involved in the purines biosynthetic pathway. Catalyzes the ATP-dependent conversion of formylglycinamide ribonucleotide (FGAR) and glutamine to yield formylglycinamidine ribonucleotide (FGAM) and glutamate. The FGAM synthase complex is composed of three subunits. PurQ produces an ammonia molecule by converting glutamine to glutamate. PurL transfers the ammonia molecule to FGAR to form FGAM in an ATP-dependent manner. PurS interacts with PurQ and PurL and is thought to assist in the transfer of the ammonia molecule from PurQ to PurL. This chain is Phosphoribosylformylglycinamidine synthase subunit PurL, found in Staphylococcus saprophyticus subsp. saprophyticus (strain ATCC 15305 / DSM 20229 / NCIMB 8711 / NCTC 7292 / S-41).